Here is a 1000-residue protein sequence, read N- to C-terminus: Isoleucine--tRNA ligase, mitochondrial (1000 aa).

The transit peptide at 1–27 (MLGAWRAAPRLRLRARFGVASVWARSA) directs the protein to the mitochondrion. Residues 102–112 (PYANGDPHVGH) carry the 'HIGH' region motif. ATP-binding residues include lysine 649 and lysine 652. The 'KMSKS' region motif lies at 649 to 653 (KMSKS).

The protein belongs to the class-I aminoacyl-tRNA synthetase family.

Its subcellular location is the mitochondrion matrix. The catalysed reaction is tRNA(Ile) + L-isoleucine + ATP = L-isoleucyl-tRNA(Ile) + AMP + diphosphate. Functionally, aminoacyl-tRNA synthetase that catalyzes the specific attachment of isoleucine to its cognate tRNA (tRNA(Ile)). This chain is Isoleucine--tRNA ligase, mitochondrial (IARS2), found in Gallus gallus (Chicken).